The sequence spans 396 residues: Initiation-specific alpha-1,6-mannosyltransferase (396 aa).

The Cytoplasmic portion of the chain corresponds to 1–7 (MLRLRLR). The helical; Signal-anchor for type II membrane protein transmembrane segment at 8-28 (SIVIGAAIAGSILLLFNHGSI) threads the bilayer. Residues 29-396 (EGMEDLTEIS…HFFAGSWKDD (368 aa)) are Lumenal-facing. A DXD motif motif is present at residues 229 to 231 (DID). N345 carries an N-linked (GlcNAc...) asparagine glycan.

The protein belongs to the glycosyltransferase 32 family. It depends on Mn(2+) as a cofactor.

It is found in the endoplasmic reticulum membrane. The protein localises to the golgi apparatus membrane. The catalysed reaction is Transfers an alpha-D-mannosyl residue from GDP-mannose into lipid-linked oligosaccharide, forming an alpha-(1-&gt;6)-D-mannosyl-D-mannose linkage.. In terms of biological role, mannosyltransferase involved in outer chain elongation of asparagine-linked oligosaccharides of the type Man(9)GlcNAc(2). May otherwise add the first alpha-1,6-mannose to the Man(8)GlcNAc(2) core oligosaccharide from the ER. Represents the first enzymatic event required for synthesis of outer chain mannose linkages on yeast secretory proteins. This chain is Initiation-specific alpha-1,6-mannosyltransferase, found in Schizosaccharomyces pombe (strain 972 / ATCC 24843) (Fission yeast).